We begin with the raw amino-acid sequence, 110 residues long: ATP-dependent Clp protease adapter protein ClpS (110 aa).

The span at 1-10 (MSDDRRRGDE) shows a compositional bias: basic and acidic residues. The segment at 1–27 (MSDDRRRGDEDGGAGTGVITKTKPKTK) is disordered.

The protein belongs to the ClpS family. Binds to the N-terminal domain of the chaperone ClpA.

Its function is as follows. Involved in the modulation of the specificity of the ClpAP-mediated ATP-dependent protein degradation. The sequence is that of ATP-dependent Clp protease adapter protein ClpS from Parvibaculum lavamentivorans (strain DS-1 / DSM 13023 / NCIMB 13966).